We begin with the raw amino-acid sequence, 191 residues long: Putative RNA-binding protein EEED8.4 (191 aa).

The RRM domain occupies 55 to 132 (KSVFIGNVDF…RPIVVTAKRT (78 aa)). The segment at 136-160 (GMGHGVRGSSRGTFGRGRGAARGAP) is disordered.

This chain is Putative RNA-binding protein EEED8.4, found in Caenorhabditis elegans.